A 421-amino-acid polypeptide reads, in one-letter code: Histidine--tRNA ligase (421 aa).

This sequence belongs to the class-II aminoacyl-tRNA synthetase family. As to quaternary structure, homodimer.

It is found in the cytoplasm. It carries out the reaction tRNA(His) + L-histidine + ATP = L-histidyl-tRNA(His) + AMP + diphosphate + H(+). In Coxiella burnetii (strain CbuK_Q154) (Coxiella burnetii (strain Q154)), this protein is Histidine--tRNA ligase.